A 198-amino-acid polypeptide reads, in one-letter code: dITP/XTP pyrophosphatase (198 aa).

Substrate is bound at residue Thr7–Lys12. Residues Glu40 and Asp69 each coordinate Mg(2+). The active-site Proton acceptor is the Asp69. Residues Ser70, Phe152 to Asp155, Lys175, and His180 to Arg181 each bind substrate.

This sequence belongs to the HAM1 NTPase family. Homodimer. Mg(2+) serves as cofactor.

It catalyses the reaction XTP + H2O = XMP + diphosphate + H(+). The catalysed reaction is dITP + H2O = dIMP + diphosphate + H(+). It carries out the reaction ITP + H2O = IMP + diphosphate + H(+). Pyrophosphatase that catalyzes the hydrolysis of nucleoside triphosphates to their monophosphate derivatives, with a high preference for the non-canonical purine nucleotides XTP (xanthosine triphosphate), dITP (deoxyinosine triphosphate) and ITP. Seems to function as a house-cleaning enzyme that removes non-canonical purine nucleotides from the nucleotide pool, thus preventing their incorporation into DNA/RNA and avoiding chromosomal lesions. The protein is dITP/XTP pyrophosphatase of Exiguobacterium sibiricum (strain DSM 17290 / CCUG 55495 / CIP 109462 / JCM 13490 / 255-15).